We begin with the raw amino-acid sequence, 749 residues long: Ribosomal RNA large subunit methyltransferase K/L (749 aa).

Residues 43–154 (QGYKVCLWSR…KDKATIYLDL (112 aa)) form the THUMP domain. Residues 386 to 406 (VEPVAPKKTNKETPEPINPWT) are disordered.

It belongs to the methyltransferase superfamily. RlmKL family.

The protein localises to the cytoplasm. It carries out the reaction guanosine(2445) in 23S rRNA + S-adenosyl-L-methionine = N(2)-methylguanosine(2445) in 23S rRNA + S-adenosyl-L-homocysteine + H(+). It catalyses the reaction guanosine(2069) in 23S rRNA + S-adenosyl-L-methionine = N(2)-methylguanosine(2069) in 23S rRNA + S-adenosyl-L-homocysteine + H(+). In terms of biological role, specifically methylates the guanine in position 2445 (m2G2445) and the guanine in position 2069 (m7G2069) of 23S rRNA. In Psychromonas ingrahamii (strain DSM 17664 / CCUG 51855 / 37), this protein is Ribosomal RNA large subunit methyltransferase K/L.